A 224-amino-acid polypeptide reads, in one-letter code: Redox-sensing transcriptional repressor Rex (224 aa).

The H-T-H motif DNA-binding region spans 17-56 (RYHRYLEELLKNDVKRISSRELSEKMGVTASQIRQDLNNF). Residue 91–96 (GAGNLG) coordinates NAD(+).

It belongs to the transcriptional regulatory Rex family. In terms of assembly, homodimer.

The protein resides in the cytoplasm. Its function is as follows. Modulates transcription in response to changes in cellular NADH/NAD(+) redox state. This chain is Redox-sensing transcriptional repressor Rex, found in Thermoanaerobacter sp. (strain X514).